The chain runs to 200 residues: Inducible T-cell costimulator (200 aa).

Residues 1–20 (MKPYFSCVFVFCFLIKLLTG) form the signal peptide. Over 21–145 (ELNDLANHRM…LCCQLKLWLP (125 aa)) the chain is Extracellular. An Ig-like V-type domain is found at 30-133 (MFSFHDGGVQ…LSGGYLLIYE (104 aa)). 2 disulfide bridges follow: C42-C109 and C63-C83. N-linked (GlcNAc...) asparagine glycosylation is found at N89 and N123. A helical transmembrane segment spans residues 146–166 (VGCAAFVAALLFGCIFIVWFA). At 167-200 (KKKYRSSVHDPNSEYMFMAAVNTNKKSRLAGMTS) the chain is on the cytoplasmic side.

As to quaternary structure, homodimer; disulfide-linked. Interacts with ICOSLG. Interacts with PIK3R1. Interacts with TBK1; this interaction is critical for the maturation of T follicular regulatory cells. N-glycosylated. As to expression, strongly expressed in the spleen and lung. Lower expression seen in liver, kidney and testis.

The protein localises to the cell membrane. Stimulatory receptor expressed in activated or antigen-experienced T-cells that plays an important role in the immune response. Upon binding to its ligand ICOSL expressed on antigen presenting cells (APCs), delivers costimulatory signals that enhances all basic T-cell responses to a foreign antigen, namely proliferation, secretion of lymphokines including IL10, up-regulation of molecules that mediate cell-cell interaction, and effective help for antibody secretion by B-cells. Also acts as a costimulatory receptor critical for the differentiation of T follicular regulatory cells upon immune challenges such as viral infection. Mechanistically, potentiates TCR-induced calcium flux by augmenting PLCG1 activation and actin remodeling. In addition, activates PI3K signaling pathways independently of calcium flux. Essential both for efficient interaction between T and B-cells and for normal antibody responses to T-cell dependent antigens. Prevents the apoptosis of pre-activated T-cells. Plays a critical role in CD40-mediated class switching of immunoglobin isotypes. This is Inducible T-cell costimulator (Icos) from Rattus norvegicus (Rat).